We begin with the raw amino-acid sequence, 610 residues long: Phosphomethylpyrimidine synthase (610 aa).

Substrate contacts are provided by residues N216, M245, Y274, H310, 330–332 (SRG), 371–374 (DGLR), and E410. H414 is a binding site for Zn(2+). Y437 serves as a coordination point for substrate. Zn(2+) is bound at residue H478. 3 residues coordinate [4Fe-4S] cluster: C558, C561, and C566.

It belongs to the ThiC family. Homodimer. Requires [4Fe-4S] cluster as cofactor.

It carries out the reaction 5-amino-1-(5-phospho-beta-D-ribosyl)imidazole + S-adenosyl-L-methionine = 4-amino-2-methyl-5-(phosphooxymethyl)pyrimidine + CO + 5'-deoxyadenosine + formate + L-methionine + 3 H(+). The protein operates within cofactor biosynthesis; thiamine diphosphate biosynthesis. Catalyzes the synthesis of the hydroxymethylpyrimidine phosphate (HMP-P) moiety of thiamine from aminoimidazole ribotide (AIR) in a radical S-adenosyl-L-methionine (SAM)-dependent reaction. This chain is Phosphomethylpyrimidine synthase, found in Rhizobium etli (strain ATCC 51251 / DSM 11541 / JCM 21823 / NBRC 15573 / CFN 42).